A 35-amino-acid chain; its full sequence is Photosystem II reaction center protein M (35 aa).

The helical transmembrane segment at 7–27 (GFIASILFVLVPTVFLLILFI) threads the bilayer.

Belongs to the PsbM family. As to quaternary structure, PSII is composed of 1 copy each of membrane proteins PsbA, PsbB, PsbC, PsbD, PsbE, PsbF, PsbH, PsbI, PsbJ, PsbK, PsbL, PsbM, PsbT, PsbX, PsbY, PsbZ, Psb30/Ycf12, peripheral proteins PsbO, CyanoQ (PsbQ), PsbU, PsbV and a large number of cofactors. It forms dimeric complexes.

It is found in the cellular thylakoid membrane. Its function is as follows. One of the components of the core complex of photosystem II (PSII). PSII is a light-driven water:plastoquinone oxidoreductase that uses light energy to abstract electrons from H(2)O, generating O(2) and a proton gradient subsequently used for ATP formation. It consists of a core antenna complex that captures photons, and an electron transfer chain that converts photonic excitation into a charge separation. This subunit is found at the monomer-monomer interface. In Microcystis aeruginosa (strain NIES-843 / IAM M-2473), this protein is Photosystem II reaction center protein M.